The following is a 115-amino-acid chain: uncharacterized protein (115 aa).

3 consecutive transmembrane segments (helical) span residues leucine 23–alanine 43, alanine 63–valine 83, and asparagine 90–alanine 110.

It localises to the cell membrane. This is an uncharacterized protein from Mycobacterium bovis (strain ATCC BAA-935 / AF2122/97).